Here is a 465-residue protein sequence, read N- to C-terminus: MEITDLAAEGNALCRIDDMVMFVPFAAPGDRCTVQVVKKKRNFMQGRIVSIESPSPIRKGPFCTHFTVCGGCKWQHIPYEIQLRAKEQQVTDALVRLGKVEVEEMQPILGSEQTEYYRNKLEFTFSNKRWLLPEEVQEVDGDFSPEVRYGLGFHIPGMFDKVLDIRECHLGAKVSDEIRLFIREYCMQDPERYPFFDLRNQEGLMRTLMIRTTSTGELMVVVVFFRDDVAAREALLAAVAERFPQITSLLYVINTKCNDTIGDQEVLLYHGREYIEEEMEGLKFKIGAKSFYQTNSRQAYQLYRIAREFAGLTGDELVYDLYTGTGTIANFVAGQAHRVIGIEYVPEAIEDARTNSLLNGIENTLFYAGDMKDILTNDFIEQHGRPDVVITDPPRAGMHESVIDAILFAAPRRIVYVSCNPATQARDLALLMADGRYRAVKSRPVDMFPHTHHVENVVLLVRNTE.

The region spanning 1–50 is the TRAM domain; the sequence is MEITDLAAEGNALCRIDDMVMFVPFAAPGDRCTVQVVKKKRNFMQGRIVS. C63, C69, C72, and C168 together coordinate [4Fe-4S] cluster. The S-adenosyl-L-methionine site is built by Q293, Y322, E343, and D392. The active-site Nucleophile is C419.

Belongs to the class I-like SAM-binding methyltransferase superfamily. RNA M5U methyltransferase family.

This is an uncharacterized protein from Porphyromonas gingivalis (strain ATCC BAA-308 / W83).